The primary structure comprises 653 residues: Sodium-dependent phosphate transporter 2 (653 aa).

The Extracellular segment spans residues methionine 1–glutamate 5. Residues tyrosine 6–alanine 26 traverse the membrane as a helical segment. The Cytoplasmic segment spans residues asparagine 27–glutamine 46. Residues alanine 47–glycine 67 form a helical membrane-spanning segment. The Extracellular segment spans residues glutamate 68–leucine 86. Asparagine 81 carries N-linked (GlcNAc...) asparagine glycosylation. Residues leucine 87–phenylalanine 107 traverse the membrane as a helical segment. Topologically, residues leucine 108–lysine 109 are cytoplasmic. The helical transmembrane segment at leucine 110 to valine 130 threads the bilayer. Residues glycine 131 to lysine 142 are Extracellular-facing. A helical transmembrane segment spans residues isoleucine 143–leucine 163. The Cytoplasmic segment spans residues methionine 164–tyrosine 187. Residues alanine 188–leucine 208 form a helical membrane-spanning segment. The Extracellular portion of the chain corresponds to glutamine 209–alanine 217. Residues leucine 218–tryptophan 238 traverse the membrane as a helical segment. At methionine 239–glutamine 483 the chain is on the cytoplasmic side. A disordered region spans residues leucine 275–proline 310. A compositionally biased stretch (low complexity) spans serine 290–serine 303. The helical transmembrane segment at valine 484 to glycine 504 threads the bilayer. Over glycine 505–serine 532 the chain is Extracellular. A helical transmembrane segment spans residues threonine 533 to glycine 553. At arginine 554–glycine 572 the chain is on the cytoplasmic side. A helical transmembrane segment spans residues phenylalanine 573–serine 587. Topologically, residues asparagine 588–serine 594 are extracellular. Residues threonine 595–arginine 610 traverse the membrane as a helical segment. Residues serine 611 to asparagine 622 lie on the Cytoplasmic side of the membrane. Residues isoleucine 623–alanine 643 form a helical membrane-spanning segment. Residues isoleucine 644–valine 653 are Extracellular-facing.

Belongs to the inorganic phosphate transporter (PiT) (TC 2.A.20) family. As to quaternary structure, homodimer.

It localises to the cell membrane. Its subcellular location is the apical cell membrane. It carries out the reaction 2 Na(+)(out) + phosphate(out) = 2 Na(+)(in) + phosphate(in). In terms of biological role, sodium-phosphate symporter which preferentially transports the monovalent form of phosphate with a stoichiometry of two sodium ions per phosphate ion. The sequence is that of Sodium-dependent phosphate transporter 2 (slc20a2) from Xenopus laevis (African clawed frog).